Reading from the N-terminus, the 185-residue chain is Protein GrpE (185 aa).

Polar residues predominate over residues 1-11 (MENTQENPTDQ). The tract at residues 1–38 (MENTQENPTDQTTEETGREAQAAEPAAQAAENAAPAAE) is disordered. Over residues 19–38 (EAQAAEPAAQAAENAAPAAE) the composition is skewed to low complexity.

The protein belongs to the GrpE family. In terms of assembly, homodimer.

It localises to the cytoplasm. Participates actively in the response to hyperosmotic and heat shock by preventing the aggregation of stress-denatured proteins, in association with DnaK and GrpE. It is the nucleotide exchange factor for DnaK and may function as a thermosensor. Unfolded proteins bind initially to DnaJ; upon interaction with the DnaJ-bound protein, DnaK hydrolyzes its bound ATP, resulting in the formation of a stable complex. GrpE releases ADP from DnaK; ATP binding to DnaK triggers the release of the substrate protein, thus completing the reaction cycle. Several rounds of ATP-dependent interactions between DnaJ, DnaK and GrpE are required for fully efficient folding. The chain is Protein GrpE from Burkholderia mallei (strain NCTC 10247).